A 198-amino-acid polypeptide reads, in one-letter code: Ribonuclease HII (198 aa).

Residues 11-198 (NLIAGVDEVG…GPVKRVLGLV (188 aa)) enclose the RNase H type-2 domain. Residues D17, E18, and D109 each contribute to the a divalent metal cation site.

The protein belongs to the RNase HII family. Requires Mn(2+) as cofactor. It depends on Mg(2+) as a cofactor.

It localises to the cytoplasm. The enzyme catalyses Endonucleolytic cleavage to 5'-phosphomonoester.. Functionally, endonuclease that specifically degrades the RNA of RNA-DNA hybrids. In Yersinia pseudotuberculosis serotype O:3 (strain YPIII), this protein is Ribonuclease HII.